The following is a 472-amino-acid chain: 3-isopropylmalate dehydratase large subunit (472 aa).

[4Fe-4S] cluster contacts are provided by Cys-347, Cys-407, and Cys-410.

Belongs to the aconitase/IPM isomerase family. LeuC type 1 subfamily. As to quaternary structure, heterodimer of LeuC and LeuD. It depends on [4Fe-4S] cluster as a cofactor.

It catalyses the reaction (2R,3S)-3-isopropylmalate = (2S)-2-isopropylmalate. It participates in amino-acid biosynthesis; L-leucine biosynthesis; L-leucine from 3-methyl-2-oxobutanoate: step 2/4. Catalyzes the isomerization between 2-isopropylmalate and 3-isopropylmalate, via the formation of 2-isopropylmaleate. In Bacillus licheniformis (strain ATCC 14580 / DSM 13 / JCM 2505 / CCUG 7422 / NBRC 12200 / NCIMB 9375 / NCTC 10341 / NRRL NRS-1264 / Gibson 46), this protein is 3-isopropylmalate dehydratase large subunit.